The chain runs to 85 residues: UPF0335 protein BH15140 (85 aa).

It belongs to the UPF0335 family.

This is UPF0335 protein BH15140 from Bartonella henselae (strain ATCC 49882 / DSM 28221 / CCUG 30454 / Houston 1) (Rochalimaea henselae).